An 86-amino-acid chain; its full sequence is Mitochondrial import inner membrane translocase subunit Tim10 (86 aa).

Residues 29–54 (CQAKCIATAFKESELTKGEAVCLDRC) carry the Twin CX3C motif motif. Cystine bridges form between Cys-29–Cys-54 and Cys-33–Cys-50.

Belongs to the small Tim family. In terms of assembly, heterohexamer; composed of 3 copies of tim-9/tin-9.1 and 3 copies of tim-10/tin-10, named soluble 70 kDa complex. The complex associates with the tim-22 component of the TIM22 complex. Interacts with multi-pass transmembrane proteins in transit.

It localises to the mitochondrion inner membrane. In terms of biological role, mitochondrial intermembrane chaperone that participates in the import and insertion of multi-pass transmembrane proteins into the mitochondrial inner membrane. May also be required for the transfer of beta-barrel precursors from the TOM complex to the sorting and assembly machinery (SAM complex) of the outer membrane. Acts as a chaperone-like protein that protects the hydrophobic precursors from aggregation and guide them through the mitochondrial intermembrane space. In Caenorhabditis briggsae, this protein is Mitochondrial import inner membrane translocase subunit Tim10 (tin-10).